The sequence spans 625 residues: ATP-dependent RNA helicase mrh4, mitochondrial (625 aa).

A mitochondrion-targeting transit peptide spans Met1 to Ala16. A compositionally biased stretch (low complexity) spans Thr19 to Ser28. Positions Thr19 to Leu119 are disordered. Residues Asp90–Thr113 are compositionally biased toward basic and acidic residues. The Q motif motif lies at Gln144–Arg177. A Helicase ATP-binding domain is found at Pro195–Ile406. An ATP-binding site is contributed by Ala208–Thr215. The DEAD box motif lies at Asp353–Asp356. One can recognise a Helicase C-terminal domain in the interval Glu453–Val625.

The protein belongs to the DEAD box helicase family. MRH4 subfamily.

It localises to the mitochondrion. It catalyses the reaction ATP + H2O = ADP + phosphate + H(+). Its function is as follows. ATP-binding RNA helicase involved in mitochondrial RNA metabolism. Required for maintenance of mitochondrial DNA. The sequence is that of ATP-dependent RNA helicase mrh4, mitochondrial (drh-15) from Neurospora crassa (strain ATCC 24698 / 74-OR23-1A / CBS 708.71 / DSM 1257 / FGSC 987).